The sequence spans 117 residues: MAYGLPRRNTVQNILKGSCYKIQEPWDLAELTKTWYSNLTNINLPFLGEIAFGSPMNLLAGQTKQDCPLPSMQTMALEKEYEAKRLAKLKSKENACKEMQVSLREKSVGLRRPLQPK.

This is an uncharacterized protein from Rattus norvegicus (Rat).